Consider the following 175-residue polypeptide: O-acetyl-ADP-ribose deacetylase (175 aa).

The region spanning 1–175 (MAVQPEVILG…IYRRLLASYP (175 aa)) is the Macro domain. Substrate contacts are provided by residues 11–12 (DI), Asn25, 33–35 (GVD), and 122–126 (STGVY). Residue Asp35 is the Proton acceptor of the active site.

It belongs to the MacroD-type family. YmdB subfamily. As to quaternary structure, homodimer. Interacts with RNase III.

The enzyme catalyses 3''-O-acetyl-ADP-D-ribose + H2O = ADP-D-ribose + acetate + H(+). The catalysed reaction is 2''-O-acetyl-ADP-D-ribose + H2O = ADP-D-ribose + acetate + H(+). Functionally, deacetylates O-acetyl-ADP ribose to yield ADP-ribose and free acetate. Down-regulates ribonuclease 3 (RNase III) activity. Acts by interacting directly with the region of the ribonuclease that is required for dimerization/activation. The protein is O-acetyl-ADP-ribose deacetylase of Klebsiella pneumoniae (strain 342).